A 223-amino-acid polypeptide reads, in one-letter code: Serine/threonine/tyrosine-interacting protein (223 aa).

One can recognise a Tyrosine-protein phosphatase domain in the interval E28 to A176. The Interaction with FBXW7 motif lies at F76 to Q78. Phosphoserine occurs at positions 184, 193, and 201. The interval G197–G223 is disordered.

The protein belongs to the protein-tyrosine phosphatase family. Non-receptor class subfamily. In terms of assembly, interacts with MAPK1; independently of MAPK1 phosphorylation status. Interacts with CARHSP1/Crhsp-24. Interacts (via FQQ motif) with FBXW7 (via F-box domain); the interaction is direct and prevents FBXW7 interaction with SKP1, a component of the SCF(FBXW7) complex.

The protein resides in the nucleus. It localises to the cytoplasm. The protein localises to the cytosol. In terms of biological role, catalytically inactive phosphatase. Acts as a nuclear anchor for MAPK1/MAPK3 (ERK1/ERK2). Modulates cell-fate decisions and cell migration by spatiotemporal regulation of MAPK1/MAPK3 (ERK1/ERK2). By binding to the F-box of FBXW7, prevents the assembly of FBXW7 into the SCF E3 ubiquitin-protein ligase complex, and thereby inhibits degradation of its substrates. Plays a role in spermatogenesis. The polypeptide is Serine/threonine/tyrosine-interacting protein (STYX) (Pongo abelii (Sumatran orangutan)).